Consider the following 415-residue polypeptide: MLFWTAFSMALSLRLALARSSIERGSTASDPQGDLLFLLDSSASVSHYEFSRVREFVGQLVATMSFGPGALRASLVHVGSQPHTEFTFDQYSSGQAIQDAIRVAPQRMGDTNTGLALAYAKEQLFAEEAGARPGVPKVLVWVTDGGSSDPVGPPMQELKDLGVTIFIVSTGRGNLLELLAAASAPAEKHLHFVDVDDLPIIARELRGSITDAMQPQQLHASEVLSSGFRLSWPPLLTADSGYYVLELVPSGKLATTRRQQLPGNATSWTWTDLDPDTDYEVSLLPESNVHLLRPQHVRVRTLQEEAGPERIVISHARPRSLRVSWAPALGPDSALGYHVQLGPLQGGSLERVEVPAGQNSTTVQGLTPCTTYLVTVTAAFRSGRQRALSAKACTASGARTRAPQSMRPEAGPREP.

An N-terminal signal peptide occupies residues 1–18 (MLFWTAFSMALSLRLALA). One can recognise a VWFA domain in the interval 34–209 (DLLFLLDSSA…IIARELRGSI (176 aa)). Residues serine 74, serine 80, and serine 93 each carry the phosphoserine modification. 2 Fibronectin type-III domains span residues 214–305 (QPQQ…LQEE) and 307–403 (GPER…TRAP). An N-linked (GlcNAc...) asparagine glycan is attached at asparagine 264. The cysteines at positions 369 and 393 are disulfide-linked. The disordered stretch occupies residues 391–415 (KACTASGARTRAPQSMRPEAGPREP).

As to quaternary structure, homodimer or homomultimer; disulfide-linked. Interacts with HSPG2. In terms of processing, N-glycosylated. As to expression, expressed at high levels in the chondrocytes. Detected in the vasculature of neural tissues, in basement membrane structures of the peripheral nervous system, in the apical ectodermal ridge of developing limb buds, and in skeletal and cardiac muscle (at protein level).

The protein localises to the secreted. The protein resides in the extracellular space. It is found in the extracellular matrix. It localises to the basement membrane. Functionally, promotes matrix assembly. Involved in the organization of skeletal muscles and in the formation of neuromuscular junctions. The polypeptide is von Willebrand factor A domain-containing protein 1 (Vwa1) (Mus musculus (Mouse)).